A 542-amino-acid chain; its full sequence is Chaperonin GroEL 1 (542 aa).

ATP contacts are provided by residues 30-33, lysine 51, 87-91, glycine 415, and aspartate 496; these read TLGP and DGTTT.

It belongs to the chaperonin (HSP60) family. As to quaternary structure, forms a cylinder of 14 subunits composed of two heptameric rings stacked back-to-back. Interacts with the co-chaperonin GroES.

The protein resides in the cytoplasm. The catalysed reaction is ATP + H2O + a folded polypeptide = ADP + phosphate + an unfolded polypeptide.. Together with its co-chaperonin GroES, plays an essential role in assisting protein folding. The GroEL-GroES system forms a nano-cage that allows encapsulation of the non-native substrate proteins and provides a physical environment optimized to promote and accelerate protein folding. This chain is Chaperonin GroEL 1, found in Sinorhizobium fredii (strain NBRC 101917 / NGR234).